The primary structure comprises 279 residues: Diaminopimelate epimerase (279 aa).

The substrate site is built by Asn-13 and Asn-66. Catalysis depends on Cys-75, which acts as the Proton donor. Residues 76 to 77 (GN), Asn-164, Asn-197, and 215 to 216 (ER) contribute to the substrate site. The active-site Proton acceptor is Cys-224. 225–226 (GT) contributes to the substrate binding site.

This sequence belongs to the diaminopimelate epimerase family. In terms of assembly, homodimer.

Its subcellular location is the cytoplasm. It catalyses the reaction (2S,6S)-2,6-diaminopimelate = meso-2,6-diaminopimelate. It functions in the pathway amino-acid biosynthesis; L-lysine biosynthesis via DAP pathway; DL-2,6-diaminopimelate from LL-2,6-diaminopimelate: step 1/1. Functionally, catalyzes the stereoinversion of LL-2,6-diaminopimelate (L,L-DAP) to meso-diaminopimelate (meso-DAP), a precursor of L-lysine and an essential component of the bacterial peptidoglycan. This chain is Diaminopimelate epimerase, found in Nostoc punctiforme (strain ATCC 29133 / PCC 73102).